The primary structure comprises 191 residues: Large ribosomal subunit protein bL25 (191 aa).

Belongs to the bacterial ribosomal protein bL25 family. CTC subfamily. Part of the 50S ribosomal subunit; part of the 5S rRNA/L5/L18/L25 subcomplex. Contacts the 5S rRNA. Binds to the 5S rRNA independently of L5 and L18.

This is one of the proteins that binds to the 5S RNA in the ribosome where it forms part of the central protuberance. In Nitratidesulfovibrio vulgaris (strain DSM 19637 / Miyazaki F) (Desulfovibrio vulgaris), this protein is Large ribosomal subunit protein bL25.